Consider the following 74-residue polypeptide: MKVPIVLMLVLLLIMPLSDGYERKRXXXVECNETCEEFCTYCDDNNAEETENCRTDQTDHSRCVDFYTANNLPT.

The N-terminal stretch at 1 to 20 (MKVPIVLMLVLLLIMPLSDG) is a signal peptide. Positions 21 to 28 (YERKRXXX) are excised as a propeptide.

The protein belongs to the conopeptide P-like superfamily. Post-translationally, contains 3 disulfide bonds. In terms of tissue distribution, expressed by the venom duct.

The protein resides in the secreted. Acts as a neurotoxin by inhibiting an ion channel. The polypeptide is Turripeptide OL135 (Iotyrris olangoensis (Sea snail)).